Here is a 131-residue protein sequence, read N- to C-terminus: Steroid Delta-isomerase (131 aa).

Y16 serves as the catalytic Proton donor. D40 acts as the Proton acceptor in catalysis. D103 provides a ligand contact to substrate.

Homodimer.

It catalyses the reaction a 3-oxo-Delta(5)-steroid = a 3-oxo-Delta(4)-steroid. The sequence is that of Steroid Delta-isomerase (ksi) from Pseudomonas putida (Arthrobacter siderocapsulatus).